The chain runs to 90 residues: Small ribosomal subunit protein bS16 (90 aa).

It belongs to the bacterial ribosomal protein bS16 family.

The polypeptide is Small ribosomal subunit protein bS16 (Anoxybacillus flavithermus (strain DSM 21510 / WK1)).